We begin with the raw amino-acid sequence, 667 residues long: UvrABC system protein B (667 aa).

One can recognise a Helicase ATP-binding domain in the interval 24-195 (EGLRRGDRFQ…SSGGVFHLRG (172 aa)). 37–44 (GVTGSGKT) lines the ATP pocket. The Beta-hairpin motif lies at 90–113 (YYDYYQPEAYIPTKDLYIEKDADI). In terms of domain architecture, Helicase C-terminal spans 428 to 581 (QVDDFIEEVQ…QLMYNIEHDI (154 aa)). Residues 626 to 661 (EEYLALLEEEMWRASSELRYEDAAMLRDEMLRIKRE) enclose the UVR domain.

It belongs to the UvrB family. Forms a heterotetramer with UvrA during the search for lesions. Interacts with UvrC in an incision complex.

The protein resides in the cytoplasm. In terms of biological role, the UvrABC repair system catalyzes the recognition and processing of DNA lesions. A damage recognition complex composed of 2 UvrA and 2 UvrB subunits scans DNA for abnormalities. Upon binding of the UvrA(2)B(2) complex to a putative damaged site, the DNA wraps around one UvrB monomer. DNA wrap is dependent on ATP binding by UvrB and probably causes local melting of the DNA helix, facilitating insertion of UvrB beta-hairpin between the DNA strands. Then UvrB probes one DNA strand for the presence of a lesion. If a lesion is found the UvrA subunits dissociate and the UvrB-DNA preincision complex is formed. This complex is subsequently bound by UvrC and the second UvrB is released. If no lesion is found, the DNA wraps around the other UvrB subunit that will check the other stand for damage. The polypeptide is UvrABC system protein B (Kosmotoga olearia (strain ATCC BAA-1733 / DSM 21960 / TBF 19.5.1)).